The following is a 285-amino-acid chain: Bifunctional protein FolD (285 aa).

NADP(+) contacts are provided by residues 165 to 167 and S190; that span reads GRS.

Belongs to the tetrahydrofolate dehydrogenase/cyclohydrolase family. As to quaternary structure, homodimer.

It catalyses the reaction (6R)-5,10-methylene-5,6,7,8-tetrahydrofolate + NADP(+) = (6R)-5,10-methenyltetrahydrofolate + NADPH. It carries out the reaction (6R)-5,10-methenyltetrahydrofolate + H2O = (6R)-10-formyltetrahydrofolate + H(+). It functions in the pathway one-carbon metabolism; tetrahydrofolate interconversion. Functionally, catalyzes the oxidation of 5,10-methylenetetrahydrofolate to 5,10-methenyltetrahydrofolate and then the hydrolysis of 5,10-methenyltetrahydrofolate to 10-formyltetrahydrofolate. The sequence is that of Bifunctional protein FolD from Burkholderia orbicola (strain AU 1054).